Reading from the N-terminus, the 192-residue chain is Pyridoxal 5'-phosphate synthase subunit PdxT (192 aa).

Residue 53-55 (GES) participates in L-glutamine binding. The Nucleophile role is filled by C82. Residues R109 and 137-138 (IR) each bind L-glutamine. Catalysis depends on charge relay system residues H173 and E175.

It belongs to the glutaminase PdxT/SNO family. In terms of assembly, in the presence of PdxS, forms a dodecamer of heterodimers. Only shows activity in the heterodimer.

It catalyses the reaction aldehydo-D-ribose 5-phosphate + D-glyceraldehyde 3-phosphate + L-glutamine = pyridoxal 5'-phosphate + L-glutamate + phosphate + 3 H2O + H(+). It carries out the reaction L-glutamine + H2O = L-glutamate + NH4(+). The protein operates within cofactor biosynthesis; pyridoxal 5'-phosphate biosynthesis. In terms of biological role, catalyzes the hydrolysis of glutamine to glutamate and ammonia as part of the biosynthesis of pyridoxal 5'-phosphate. The resulting ammonia molecule is channeled to the active site of PdxS. In Methanoculleus marisnigri (strain ATCC 35101 / DSM 1498 / JR1), this protein is Pyridoxal 5'-phosphate synthase subunit PdxT.